A 556-amino-acid chain; its full sequence is 2-isopropylmalate synthase (556 aa).

One can recognise a Pyruvate carboxyltransferase domain in the interval 33-307 (PIWLSTDLRD…DPQLDFSDID (275 aa)). 4 residues coordinate Mg(2+): D42, H246, H248, and N282. Residues 439–556 (ASAPYALKGH…ALSQAESRAA (118 aa)) form a regulatory domain region.

It belongs to the alpha-IPM synthase/homocitrate synthase family. LeuA type 2 subfamily. As to quaternary structure, homodimer. Mg(2+) is required as a cofactor.

Its subcellular location is the cytoplasm. It carries out the reaction 3-methyl-2-oxobutanoate + acetyl-CoA + H2O = (2S)-2-isopropylmalate + CoA + H(+). It functions in the pathway amino-acid biosynthesis; L-leucine biosynthesis; L-leucine from 3-methyl-2-oxobutanoate: step 1/4. Catalyzes the condensation of the acetyl group of acetyl-CoA with 3-methyl-2-oxobutanoate (2-ketoisovalerate) to form 3-carboxy-3-hydroxy-4-methylpentanoate (2-isopropylmalate). The chain is 2-isopropylmalate synthase from Ectopseudomonas mendocina (strain ymp) (Pseudomonas mendocina).